A 289-amino-acid polypeptide reads, in one-letter code: Aquaporin PIP1-2 (289 aa).

A disordered region spans residues 1-36 (MEGKEEDVRLGANKFSERQPIGTAAQGAADDKDYKE). 2 consecutive transmembrane segments (helical) span residues 58–78 (IAEF…VMGV) and 93–115 (IAWS…SGGH). The NPA 1 motif lies at 117–119 (NPA). 3 helical membrane-spanning segments follow: residues 136-156 (LFYI…VKGF), 178-198 (GDGL…VFSA), and 212-232 (ILAP…TIPI). Residues 238-240 (NPA) carry the NPA 2 motif. The helical transmembrane segment at 260 to 280 (IFWVGPFIGAALAAIYHQVII) threads the bilayer.

It belongs to the MIP/aquaporin (TC 1.A.8) family. PIP (TC 1.A.8.11) subfamily. In terms of assembly, interacts with PIP2-1 to form heteromers. In terms of tissue distribution, highly expressed in developing tassels and at lower levels in roots, shoots, ears and embryos. Expressed in the root growing zone at 5-6 mm from the root tip. Expressed in xylem parenchyma.

It is found in the cell membrane. Functionally, water channel required to facilitate the transport of water across cell membrane. Active as heteromers with PIP1-1, PIP2-1, PIP2-4 or PIP2-5, but not as homomers. In Zea mays (Maize), this protein is Aquaporin PIP1-2 (PIP1-2).